Here is a 622-residue protein sequence, read N- to C-terminus: Polygalacturonase 1 beta-like protein 1 (622 aa).

Residues Met1–Ala21 form the signal peptide. The stretch at Phe118–Tyr121 is one FXXY 1 repeat. Residue Asn125 is glycosylated (N-linked (GlcNAc...) asparagine). 11 FXXY repeats span residues Phe126–Tyr129, Phe140–Tyr143, Phe154–Tyr157, Phe168–Tyr171, Phe182–Tyr185, Phe196–Tyr199, Phe210–Tyr213, Phe224–Tyr227, Phe239–Tyr242, Phe253–Tyr256, and Phe267–Tyr270. Asn278 carries N-linked (GlcNAc...) asparagine glycosylation. FXXY repeat units follow at residues Phe281 to Tyr284, Phe295 to Tyr298, Phe309 to Tyr312, Phe323 to Tyr326, Phe337 to Tyr340, Phe351 to Tyr354, and Phe365 to Tyr368. Asn371 is a glycosylation site (N-linked (GlcNAc...) asparagine). FXXY repeat units follow at residues Phe374–Tyr377 and Phe384–Tyr387. 2 N-linked (GlcNAc...) asparagine glycosylation sites follow: Asn388 and Asn461. The 215-residue stretch at Phe407 to Ala621 folds into the BURP domain.

Expressed in flowers and stems.

It localises to the secreted. The protein localises to the extracellular space. Its subcellular location is the apoplast. The protein resides in the cell wall. Involved in cell size determination. This is Polygalacturonase 1 beta-like protein 1 from Arabidopsis thaliana (Mouse-ear cress).